A 352-amino-acid chain; its full sequence is Mitochondrial ubiquitin ligase activator of NFKB 1 (352 aa).

The Cytoplasmic segment spans residues 1 to 8; the sequence is MENGGRPS. Residues 9–29 traverse the membrane as a helical segment; sequence LCQFILLGTTSVVTAALYSVY. Residues 30–238 are Mitochondrial intermembrane-facing; sequence RQKAWVSQEL…LLQRQESSVR (209 aa). Lys-52 is covalently cross-linked (Glycyl lysine isopeptide (Lys-Gly) (interchain with G-Cter in ubiquitin)). Residues 239–259 traverse the membrane as a helical segment; it reads LWKVLALVFGFATCATLFFIL. Over 260–352 the chain is Cytoplasmic; it reads RKQYLQRQER…ITRVIPLYNS (93 aa). Glycyl lysine isopeptide (Lys-Gly) (interchain with G-Cter in ubiquitin) cross-links involve residues Lys-273 and Lys-299. An RING-type zinc finger spans residues 302-340; that stretch reads CVVCLSSFKSCVFLECGHVCSCTECYRALPEPKKCPICR.

Homooligomer. Interacts with MAP3K7/TAK1. Interacts with UBC9. Interacts with and sumoylates DNM1L. Interacts with MAVS. Interacts with TP53 (via N-terminus); the interaction leads to ubiquitination and proteasomal degradation of TP53. Ubiquitinated by PRKN during mitophagy, leading to its degradation and enhancement of mitophagy. Deubiquitinated by USP30.

It localises to the mitochondrion outer membrane. Its subcellular location is the peroxisome. The catalysed reaction is S-ubiquitinyl-[E2 ubiquitin-conjugating enzyme]-L-cysteine + [acceptor protein]-L-lysine = [E2 ubiquitin-conjugating enzyme]-L-cysteine + N(6)-ubiquitinyl-[acceptor protein]-L-lysine.. It functions in the pathway protein modification; protein ubiquitination. It participates in protein modification; protein sumoylation. Functionally, exhibits weak E3 ubiquitin-protein ligase activity. E3 ubiquitin ligases accept ubiquitin from an E2 ubiquitin-conjugating enzyme in the form of a thioester and then directly transfer the ubiquitin to targeted substrates. Can ubiquitinate AKT1 preferentially at 'Lys-284' involving 'Lys-48'-linked polyubiquitination and seems to be involved in regulation of Akt signaling by targeting phosphorylated Akt to proteasomal degradation. Mediates polyubiquitination of cytoplasmic TP53 at 'Lys-24' which targets TP53 for proteasomal degradation, thus reducing TP53 levels in the cytoplasm and mitochondrion. Proposed to preferentially act as a SUMO E3 ligase at physiological concentrations. Plays a role in the control of mitochondrial morphology by promoting mitochondrial fragmentation, and influences mitochondrial localization. Likely to promote mitochondrial fission through negatively regulating the mitochondrial fusion proteins MFN1 and MFN2, acting in a pathway that is parallel to the PRKN/PINK1 regulatory pathway. May also be involved in the sumoylation of the membrane fission protein DNM1L. Inhibits cell growth. When overexpressed, activates JNK through MAP3K7/TAK1 and induces caspase-dependent apoptosis. Involved in the modulation of innate immune defense against viruses by inhibiting RIGI-dependent antiviral response. Can mediate RIGI sumoylation and disrupt its polyubiquitination. This is Mitochondrial ubiquitin ligase activator of NFKB 1 (MUL1) from Macaca fascicularis (Crab-eating macaque).